Reading from the N-terminus, the 281-residue chain is Small ribosomal subunit protein uS2 (281 aa).

The tract at residues 229-281 is disordered; that stretch reads RSGANKTEGEAAEQPMAAWEKELLTNEAPAEASAEAAAPAAAEGETAEAPKAE. The span at 255–275 shows a compositional bias: low complexity; it reads EAPAEASAEAAAPAAAEGETA.

This sequence belongs to the universal ribosomal protein uS2 family.

This is Small ribosomal subunit protein uS2 from Bifidobacterium longum subsp. infantis (strain ATCC 15697 / DSM 20088 / JCM 1222 / NCTC 11817 / S12).